We begin with the raw amino-acid sequence, 100 residues long: Small ribosomal subunit protein uS14c (100 aa).

This sequence belongs to the universal ribosomal protein uS14 family. In terms of assembly, part of the 30S ribosomal subunit.

Its subcellular location is the plastid. The protein resides in the chloroplast. Its function is as follows. Binds 16S rRNA, required for the assembly of 30S particles. The protein is Small ribosomal subunit protein uS14c of Buxus microphylla (Littleleaf boxwood).